The chain runs to 256 residues: 5-oxoprolinase subunit A 2 (256 aa).

Belongs to the LamB/PxpA family. Forms a complex composed of PxpA, PxpB and PxpC.

It catalyses the reaction 5-oxo-L-proline + ATP + 2 H2O = L-glutamate + ADP + phosphate + H(+). Functionally, catalyzes the cleavage of 5-oxoproline to form L-glutamate coupled to the hydrolysis of ATP to ADP and inorganic phosphate. This Bradyrhizobium diazoefficiens (strain JCM 10833 / BCRC 13528 / IAM 13628 / NBRC 14792 / USDA 110) protein is 5-oxoprolinase subunit A 2.